The following is a 109-amino-acid chain: Putative double-stranded DNA mimic protein YciU (109 aa).

This sequence belongs to the putative dsDNA mimic protein family.

Its function is as follows. May act as a double-stranded DNA (dsDNA) mimic. Probably regulates the activity of a dsDNA-binding protein. The protein is Putative double-stranded DNA mimic protein YciU of Salmonella arizonae (strain ATCC BAA-731 / CDC346-86 / RSK2980).